We begin with the raw amino-acid sequence, 295 residues long: Tetrahydromethanopterin S-methyltransferase subunit E (295 aa).

A run of 7 helical transmembrane segments spans residues 4 to 24, 60 to 80, 87 to 107, 140 to 160, 161 to 181, 234 to 254, and 255 to 275; these read MITG…AGAA, GEPV…FVLM, VIMA…TYAV, GFIV…PIPG, FAHP…IGAI, YGGP…FWNT, and IVFG…LLII.

It belongs to the MtrE family. The complex is composed of 8 subunits; MtrA, MtrB, MtrC, MtrD, MtrE, MtrF, MtrG and MtrH.

Its subcellular location is the cell membrane. It catalyses the reaction 5-methyl-5,6,7,8-tetrahydromethanopterin + coenzyme M + 2 Na(+)(in) = 5,6,7,8-tetrahydromethanopterin + methyl-coenzyme M + 2 Na(+)(out). It functions in the pathway one-carbon metabolism; methanogenesis from CO(2); methyl-coenzyme M from 5,10-methylene-5,6,7,8-tetrahydromethanopterin: step 2/2. Part of a complex that catalyzes the formation of methyl-coenzyme M and tetrahydromethanopterin from coenzyme M and methyl-tetrahydromethanopterin. This is an energy-conserving, sodium-ion translocating step. The polypeptide is Tetrahydromethanopterin S-methyltransferase subunit E (Methanothermobacter marburgensis (strain ATCC BAA-927 / DSM 2133 / JCM 14651 / NBRC 100331 / OCM 82 / Marburg) (Methanobacterium thermoautotrophicum)).